The primary structure comprises 131 residues: Large ribosomal subunit protein bL19 (131 aa).

Belongs to the bacterial ribosomal protein bL19 family.

Its function is as follows. This protein is located at the 30S-50S ribosomal subunit interface and may play a role in the structure and function of the aminoacyl-tRNA binding site. The polypeptide is Large ribosomal subunit protein bL19 (Rhodopseudomonas palustris (strain BisA53)).